A 134-amino-acid chain; its full sequence is Lymphocyte antigen 6A-2/6E-1 (134 aa).

Residues 1–26 (MDTSHTTKSCLLILLVALLCAERAQG) form the signal peptide. Residues 27–119 (LECYQCYGVP…NGGSTWTMAG (93 aa)) form the UPAR/Ly6 domain. Cystine bridges form between Cys29/Cys53, Cys32/Cys41, Cys46/Cys74, Cys78/Cys98, and Cys99/Cys104. Gly112 is lipidated: GPI-anchor amidated glycine. The propeptide at 113 to 134 (STWTMAGVLLFSLSSVLLQTLL) is removed in mature form.

O-glycosylated. Not N-glycosylated. In terms of processing, not phosphorylated. Widely expressed.

The protein resides in the cell membrane. T-cell activation. The chain is Lymphocyte antigen 6A-2/6E-1 (Ly6a) from Mus musculus (Mouse).